Here is a 307-residue protein sequence, read N- to C-terminus: Myeloid-associated differentiation marker-like protein 2 (307 aa).

MARVEL domains are found at residues 17 to 154 (AVTS…ARPG) and 159 to 303 (YMAT…RIRF). 7 helical membrane-spanning segments follow: residues 53-73 (FCMA…ACEF), 90-110 (AFAM…PLYF), 129-149 (LAAS…VALT), 163-183 (VSGL…GALV), 198-218 (VAVY…SVMG), 232-252 (IVYT…WPVF), and 278-298 (LVVA…LAYS).

The protein belongs to the MAL family.

The protein resides in the membrane. The chain is Myeloid-associated differentiation marker-like protein 2 (Myadml2) from Mus musculus (Mouse).